An 86-amino-acid polypeptide reads, in one-letter code: MSLLARLFGEKKKTAEIAKNRLSLLIAHERSGGAGTADFLPALQKDLIDVISKYVNVNPDDIKVQLDKQDNVEVLEVNIVLPEHGR.

This sequence belongs to the MinE family.

Its function is as follows. Prevents the cell division inhibition by proteins MinC and MinD at internal division sites while permitting inhibition at polar sites. This ensures cell division at the proper site by restricting the formation of a division septum at the midpoint of the long axis of the cell. The polypeptide is Cell division topological specificity factor (Azoarcus sp. (strain BH72)).